Consider the following 127-residue polypeptide: Glycine cleavage system H protein (127 aa).

The region spanning Glu22–Glu103 is the Lipoyl-binding domain. At Lys63 the chain carries N6-lipoyllysine.

This sequence belongs to the GcvH family. As to quaternary structure, the glycine cleavage system is composed of four proteins: P, T, L and H. (R)-lipoate is required as a cofactor.

Functionally, the glycine cleavage system catalyzes the degradation of glycine. The H protein shuttles the methylamine group of glycine from the P protein to the T protein. This is Glycine cleavage system H protein from Alkaliphilus oremlandii (strain OhILAs) (Clostridium oremlandii (strain OhILAs)).